We begin with the raw amino-acid sequence, 570 residues long: Probable metalloreductase AIM14 (570 aa).

7 helical membrane-spanning segments follow: residues Ile-21–Leu-41, Ala-70–Leu-90, Leu-101–Arg-118, Ile-142–Asp-162, Phe-177–Met-197, Leu-204–Ser-224, and Phe-230–Phe-250. The region spanning Leu-101–Leu-219 is the Ferric oxidoreductase domain. Residues Phe-250–Pro-388 enclose the FAD-binding FR-type domain. Polar residues predominate over residues Ser-481–Asn-505. The tract at residues Ser-481–Ser-507 is disordered.

It belongs to the ferric reductase (FRE) family. AIM14 subfamily. In terms of assembly, interacts with ribosomes.

Its subcellular location is the membrane. In terms of biological role, probable cell surface metalloreductase. May be involved in iron or copper homeostasis. The chain is Probable metalloreductase AIM14 (AIM14) from Saccharomyces cerevisiae (strain RM11-1a) (Baker's yeast).